The sequence spans 274 residues: 2,3,4,5-tetrahydropyridine-2,6-dicarboxylate N-succinyltransferase (274 aa).

2 residues coordinate substrate: Arg-104 and Asp-141.

The protein belongs to the transferase hexapeptide repeat family. In terms of assembly, homotrimer.

It localises to the cytoplasm. The enzyme catalyses (S)-2,3,4,5-tetrahydrodipicolinate + succinyl-CoA + H2O = (S)-2-succinylamino-6-oxoheptanedioate + CoA. The protein operates within amino-acid biosynthesis; L-lysine biosynthesis via DAP pathway; LL-2,6-diaminopimelate from (S)-tetrahydrodipicolinate (succinylase route): step 1/3. This Shigella boydii serotype 4 (strain Sb227) protein is 2,3,4,5-tetrahydropyridine-2,6-dicarboxylate N-succinyltransferase.